Reading from the N-terminus, the 205-residue chain is Small ribosomal subunit protein uS4 (205 aa).

A disordered region spans residues 18–46 (NIWGRPKSPVNRREYGPGQHGQRRKGKLS). In terms of domain architecture, S4 RNA-binding spans 94 to 154 (RRLDAVVYRA…EASKQLAHVL (61 aa)).

Belongs to the universal ribosomal protein uS4 family. As to quaternary structure, part of the 30S ribosomal subunit. Contacts protein S5. The interaction surface between S4 and S5 is involved in control of translational fidelity.

Functionally, one of the primary rRNA binding proteins, it binds directly to 16S rRNA where it nucleates assembly of the body of the 30S subunit. In terms of biological role, with S5 and S12 plays an important role in translational accuracy. This Bradyrhizobium diazoefficiens (strain JCM 10833 / BCRC 13528 / IAM 13628 / NBRC 14792 / USDA 110) protein is Small ribosomal subunit protein uS4.